A 428-amino-acid chain; its full sequence is Phosphomethylpyrimidine synthase 2 (428 aa).

Substrate contacts are provided by residues N65, M94, Y123, H158, 180 to 182 (SRG), 221 to 224 (DGMR), and E260. H264 contacts Zn(2+). Substrate is bound at residue Y287. H328 contributes to the Zn(2+) binding site. C405, C408, and C412 together coordinate [4Fe-4S] cluster.

It belongs to the ThiC family. Requires [4Fe-4S] cluster as cofactor.

It carries out the reaction 5-amino-1-(5-phospho-beta-D-ribosyl)imidazole + S-adenosyl-L-methionine = 4-amino-2-methyl-5-(phosphooxymethyl)pyrimidine + CO + 5'-deoxyadenosine + formate + L-methionine + 3 H(+). The protein operates within cofactor biosynthesis; thiamine diphosphate biosynthesis. In terms of biological role, catalyzes the synthesis of the hydroxymethylpyrimidine phosphate (HMP-P) moiety of thiamine from aminoimidazole ribotide (AIR) in a radical S-adenosyl-L-methionine (SAM)-dependent reaction. In Methanosarcina barkeri (strain Fusaro / DSM 804), this protein is Phosphomethylpyrimidine synthase 2.